A 480-amino-acid polypeptide reads, in one-letter code: MAPNTDIGLIGLAVMGKNLVLNMVDHGFSVSVYNRSPAKTEEFLKDHGESGALQGFTTIQEFVQSLKRPRKIMIMIKAGAPVDEMIASLLPFLEEGDILIDGGNSYYLDSEQRYVDLKKEGILFVGMGVSGGEEGARKGPSIMPGGNIDAWPAIAPIFQSIAAQVDGRPCCSWIGTGGAGHFVKAVHNGIEYGDIQLICETYEILKTRLNLSLEQIGNIFFEWNQTDLNSYLIGAAAAVLIAKDENGNAIASTILDVAGQKGTGRWVAEDAIKAGVPMSLIIESVLARYLSTWKEVRTKAAQEFPGIPLLCQPPQEASAFIEDVREALYAAKIISYAQGFMLLKQVSQDKGWDLNLGELALIWRGGCIIQSAFLDKIHQGFENSPEAHSLILQDYFKKVLFDSETGFRRAVLHAIGSGVAIPCLSSALSFYDGYRTVDSSLFLVQGLRDYFGAHGYERRDCPRGEFYHTDWLETKKTFRV.

NADP(+) is bound by residues 11-16 (GLAVMG), 34-36 (NRS), 76-78 (IKA), and Asn-104. Substrate is bound by residues Asn-104 and 130-132 (SGG). The active-site Proton acceptor is the Lys-184. A substrate-binding site is contributed by 187 to 188 (HN). The active-site Proton donor is the Glu-191. The substrate site is built by Tyr-192, Lys-261, Arg-288, Arg-448, and His-454.

It belongs to the 6-phosphogluconate dehydrogenase family. As to quaternary structure, homodimer.

The catalysed reaction is 6-phospho-D-gluconate + NADP(+) = D-ribulose 5-phosphate + CO2 + NADPH. It functions in the pathway carbohydrate degradation; pentose phosphate pathway; D-ribulose 5-phosphate from D-glucose 6-phosphate (oxidative stage): step 3/3. In terms of biological role, catalyzes the oxidative decarboxylation of 6-phosphogluconate to ribulose 5-phosphate and CO(2), with concomitant reduction of NADP to NADPH. In Chlamydia trachomatis serovar D (strain ATCC VR-885 / DSM 19411 / UW-3/Cx), this protein is 6-phosphogluconate dehydrogenase, decarboxylating (gnd).